We begin with the raw amino-acid sequence, 398 residues long: MTALDRRYDTQIHRRITRTVMVGDVAIGSDHPVVVQSMINEDTLDIDAAVAGIVRLAEAGSEIVRVTTPSMAHARAMGEIRAAVRARGCTVPLVADVHHNGVKIAMEVAQHVDKVRINPGLFVFDKPDPNRQEFSDKEFAAIGARIHETFEPLVTLLRDQNKALRIGVNHGSLAERMLFTYGDTPKGMVESAMEFVRICDELDFHNIVISMKASRAPVMLAAYRLMADTMDKEGFNYPLHLGVTEAGDGDYGRVKSTAGIATLLADGLGDTIRVSLTEAPEREIPVCYSILQSLGLRKTMVEYVACPSCGRTLFNLEEVLHKVRDATSHLTGLDIAVMGCIVNGPGEMADADYGYVGKTPGVISLYRGRDEIRKVPEEEGVNALIQLIKEDGRWVEPA.

[4Fe-4S] cluster contacts are provided by Cys-306, Cys-309, Cys-340, and Glu-347.

This sequence belongs to the IspG family. It depends on [4Fe-4S] cluster as a cofactor.

The enzyme catalyses (2E)-4-hydroxy-3-methylbut-2-enyl diphosphate + 2 oxidized [2Fe-2S]-[ferredoxin] + H2O = 2-C-methyl-D-erythritol 2,4-cyclic diphosphate + 2 reduced [2Fe-2S]-[ferredoxin] + H(+). It participates in isoprenoid biosynthesis; isopentenyl diphosphate biosynthesis via DXP pathway; isopentenyl diphosphate from 1-deoxy-D-xylulose 5-phosphate: step 5/6. In terms of biological role, converts 2C-methyl-D-erythritol 2,4-cyclodiphosphate (ME-2,4cPP) into 1-hydroxy-2-methyl-2-(E)-butenyl 4-diphosphate. The protein is 4-hydroxy-3-methylbut-2-en-1-yl diphosphate synthase (ferredoxin) of Parasynechococcus marenigrum (strain WH8102).